The primary structure comprises 510 residues: Probable gamma-aminobutyrate transaminase 3, mitochondrial (510 aa).

The N-terminal 41 residues, 1–41 (MICRSLLLLRSNAASKASSIVKHVAATGCLPEYSSEAPARY), are a transit peptide targeting the mitochondrion. 166-167 (GS) is a binding site for pyridoxal 5'-phosphate. Tyrosine 199 contacts substrate. Aspartate 306 provides a ligand contact to pyridoxal 5'-phosphate. Lysine 335 contributes to the substrate binding site. N6-(pyridoxal phosphate)lysine is present on lysine 335.

This sequence belongs to the class-III pyridoxal-phosphate-dependent aminotransferase family.

Its subcellular location is the mitochondrion. The enzyme catalyses 4-aminobutanoate + pyruvate = succinate semialdehyde + L-alanine. It carries out the reaction 4-aminobutanoate + glyoxylate = succinate semialdehyde + glycine. Transaminase that degrades gamma-amino butyric acid (GABA). In Oryza sativa subsp. indica (Rice), this protein is Probable gamma-aminobutyrate transaminase 3, mitochondrial.